The chain runs to 39 residues: Cytochrome b559 subunit beta (39 aa).

Residues 14 to 30 (WLAVHGLAVPTVFFLGS) form a helical membrane-spanning segment. Position 18 (histidine 18) interacts with heme.

It belongs to the PsbE/PsbF family. In terms of assembly, heterodimer of an alpha subunit and a beta subunit. PSII is composed of 1 copy each of membrane proteins PsbA, PsbB, PsbC, PsbD, PsbE, PsbF, PsbH, PsbI, PsbJ, PsbK, PsbL, PsbM, PsbT, PsbX, PsbY, PsbZ, Psb30/Ycf12, at least 3 peripheral proteins of the oxygen-evolving complex and a large number of cofactors. It forms dimeric complexes. Heme b is required as a cofactor.

It is found in the plastid membrane. In terms of biological role, this b-type cytochrome is tightly associated with the reaction center of photosystem II (PSII). PSII is a light-driven water:plastoquinone oxidoreductase that uses light energy to abstract electrons from H(2)O, generating O(2) and a proton gradient subsequently used for ATP formation. It consists of a core antenna complex that captures photons, and an electron transfer chain that converts photonic excitation into a charge separation. This chain is Cytochrome b559 subunit beta, found in Cuscuta europaea (European dodder).